The primary structure comprises 521 residues: Protein DETOXIFICATION 44, chloroplastic (521 aa).

The N-terminal 31 residues, 1–31 (MAAVATSFCFSPHRSPSRFGNPNSSIRRTIV), are a transit peptide targeting the chloroplast. Positions 12–73 (PHRSPSRFGN…DHDHKPDPGI (62 aa)) are disordered. 2 stretches are compositionally biased toward polar residues: residues 18-27 (RFGNPNSSIR) and 42-61 (AVST…TSQN). 12 helical membrane-spanning segments follow: residues 80–100 (IMSI…TSLV), 103–123 (AFVG…VSVF), 167–187 (VSTS…ALSL), 213–235 (RLRA…FRGF), 242–262 (LYAV…LIFV), 268–288 (SGAA…LLWK), 314–334 (LLIG…SLAA), 345–365 (QIVL…AIAA), 385–405 (LFGV…VLFI), 423–443 (IALS…LAFV), 454–474 (FGFA…FMLV), and 481–503 (LAGI…AWRL).

The protein belongs to the multi antimicrobial extrusion (MATE) (TC 2.A.66.1) family. In terms of tissue distribution, expressed in shoots.

Its subcellular location is the plastid. The protein localises to the chloroplast membrane. In Arabidopsis thaliana (Mouse-ear cress), this protein is Protein DETOXIFICATION 44, chloroplastic.